Here is a 488-residue protein sequence, read N- to C-terminus: Ribulose bisphosphate carboxylase large chain (488 aa).

Substrate is bound by residues N127 and T177. K179 (proton acceptor) is an active-site residue. A substrate-binding site is contributed by K181. Residues K205, D207, and E208 each coordinate Mg(2+). K205 is subject to N6-carboxylysine. Residue H297 is the Proton acceptor of the active site. Positions 298, 330, and 382 each coordinate substrate.

It belongs to the RuBisCO large chain family. Type I subfamily. In terms of assembly, heterohexadecamer of 8 large chains and 8 small chains. It depends on Mg(2+) as a cofactor.

It is found in the plastid. It localises to the chloroplast. It catalyses the reaction 2 (2R)-3-phosphoglycerate + 2 H(+) = D-ribulose 1,5-bisphosphate + CO2 + H2O. The enzyme catalyses D-ribulose 1,5-bisphosphate + O2 = 2-phosphoglycolate + (2R)-3-phosphoglycerate + 2 H(+). Functionally, ruBisCO catalyzes two reactions: the carboxylation of D-ribulose 1,5-bisphosphate, the primary event in carbon dioxide fixation, as well as the oxidative fragmentation of the pentose substrate in the photorespiration process. Both reactions occur simultaneously and in competition at the same active site. This chain is Ribulose bisphosphate carboxylase large chain, found in Pyropia suborbiculata (Red alga).